The chain runs to 89 residues: Elongation factor 1-beta (89 aa).

This sequence belongs to the EF-1-beta/EF-1-delta family.

Promotes the exchange of GDP for GTP in EF-1-alpha/GDP, thus allowing the regeneration of EF-1-alpha/GTP that could then be used to form the ternary complex EF-1-alpha/GTP/AAtRNA. The polypeptide is Elongation factor 1-beta (Methanococcus maripaludis (strain DSM 14266 / JCM 13030 / NBRC 101832 / S2 / LL)).